Consider the following 184-residue polypeptide: Peptide deformylase (184 aa).

2 residues coordinate Fe cation: C98 and H140. The active site involves E141. H144 contributes to the Fe cation binding site.

It belongs to the polypeptide deformylase family. The cofactor is Fe(2+).

The enzyme catalyses N-terminal N-formyl-L-methionyl-[peptide] + H2O = N-terminal L-methionyl-[peptide] + formate. Removes the formyl group from the N-terminal Met of newly synthesized proteins. Requires at least a dipeptide for an efficient rate of reaction. N-terminal L-methionine is a prerequisite for activity but the enzyme has broad specificity at other positions. In Bacteroides thetaiotaomicron (strain ATCC 29148 / DSM 2079 / JCM 5827 / CCUG 10774 / NCTC 10582 / VPI-5482 / E50), this protein is Peptide deformylase.